We begin with the raw amino-acid sequence, 522 residues long: Protein nucleotidyltransferase YdiU (522 aa).

ATP contacts are provided by Gly109, Gly111, Arg112, Lys132, Asp144, Gly145, Arg195, and Arg202. The Proton acceptor role is filled by Asp271. Positions 272 and 281 each coordinate Mg(2+). Asp281 contacts ATP.

This sequence belongs to the SELO family. Requires Mg(2+) as cofactor. Mn(2+) is required as a cofactor.

It carries out the reaction L-seryl-[protein] + ATP = 3-O-(5'-adenylyl)-L-seryl-[protein] + diphosphate. The catalysed reaction is L-threonyl-[protein] + ATP = 3-O-(5'-adenylyl)-L-threonyl-[protein] + diphosphate. It catalyses the reaction L-tyrosyl-[protein] + ATP = O-(5'-adenylyl)-L-tyrosyl-[protein] + diphosphate. The enzyme catalyses L-histidyl-[protein] + UTP = N(tele)-(5'-uridylyl)-L-histidyl-[protein] + diphosphate. It carries out the reaction L-seryl-[protein] + UTP = O-(5'-uridylyl)-L-seryl-[protein] + diphosphate. The catalysed reaction is L-tyrosyl-[protein] + UTP = O-(5'-uridylyl)-L-tyrosyl-[protein] + diphosphate. In terms of biological role, nucleotidyltransferase involved in the post-translational modification of proteins. It can catalyze the addition of adenosine monophosphate (AMP) or uridine monophosphate (UMP) to a protein, resulting in modifications known as AMPylation and UMPylation. The chain is Protein nucleotidyltransferase YdiU from Burkholderia ambifaria (strain ATCC BAA-244 / DSM 16087 / CCUG 44356 / LMG 19182 / AMMD) (Burkholderia cepacia (strain AMMD)).